Here is a 109-residue protein sequence, read N- to C-terminus: Flagellar hook-basal body complex protein FliE (109 aa).

Belongs to the FliE family.

Its subcellular location is the bacterial flagellum basal body. This chain is Flagellar hook-basal body complex protein FliE, found in Stutzerimonas stutzeri (strain A1501) (Pseudomonas stutzeri).